Reading from the N-terminus, the 946-residue chain is Aminopeptidase N (946 aa).

The N-terminal stretch at 1-15 (MRLLICLTLLGLVCG) is a signal peptide. N-linked (GlcNAc...) asparagine glycosylation occurs at asparagine 60. 308–312 (GAMEN) contacts substrate. Histidine 344 is a Zn(2+) binding site. Glutamate 345 acts as the Proton acceptor in catalysis. Residues histidine 348 and glutamate 367 each coordinate Zn(2+). Residues asparagine 550 and asparagine 605 are each glycosylated (N-linked (GlcNAc...) asparagine). Intrachain disulfides connect cysteine 715–cysteine 722 and cysteine 751–cysteine 787.

It belongs to the peptidase M1 family. It depends on Zn(2+) as a cofactor.

The protein localises to the cell membrane. It carries out the reaction Release of an N-terminal amino acid, Xaa-|-Yaa- from a peptide, amide or arylamide. Xaa is preferably Ala, but may be most amino acids including Pro (slow action). When a terminal hydrophobic residue is followed by a prolyl residue, the two may be released as an intact Xaa-Pro dipeptide.. The polypeptide is Aminopeptidase N (APN1) (Plutella xylostella (Diamondback moth)).